The sequence spans 234 residues: Ras-related protein Rab-20 (234 aa).

Residues Gly-17, Lys-18, Thr-19, Asp-32, and Thr-36 each coordinate GTP. A Mg(2+)-binding site is contributed by Thr-19. 2 short sequence motifs (switch) span residues 28 to 41 (RRFP…GGAF) and 55 to 72 (DTAG…YCRG). The Mg(2+) site is built by Thr-36 and Asp-55. GTP-binding residues include Gly-58, Asn-113, Lys-114, and Asp-116. The interval 125–144 (GQEKEECSPNMDAGDRVSPR) is disordered. The span at 126 to 142 (QEKEECSPNMDAGDRVS) shows a compositional bias: basic and acidic residues. GTP contacts are provided by Ala-184 and Lys-185. The disordered stretch occupies residues 212-234 (RPSHTVDISSHKPPKRTRSGCCA). Over residues 223-234 (KPPKRTRSGCCA) the composition is skewed to basic residues. 2 S-geranylgeranyl cysteine lipidation sites follow: Cys-232 and Cys-233.

The protein belongs to the small GTPase superfamily. Rab family. It depends on Mg(2+) as a cofactor. In terms of tissue distribution, low or absent expression in normal pancreas and stronger expression in 15 of 18 exocrine pancreatic adenocarcinomas (at protein level).

The protein resides in the golgi apparatus. The protein localises to the cytoplasmic vesicle. It is found in the phagosome. It localises to the phagosome membrane. It catalyses the reaction GTP + H2O = GDP + phosphate + H(+). With respect to regulation, regulated by guanine nucleotide exchange factors (GEFs) which promote the exchange of bound GDP for free GTP. Regulated by GTPase activating proteins (GAPs) which increase the GTP hydrolysis activity. Inhibited by GDP dissociation inhibitors (GDIs). In terms of biological role, the small GTPases Rab are key regulators of intracellular membrane trafficking, from the formation of transport vesicles to their fusion with membranes. Rabs cycle between an inactive GDP-bound form and an active GTP-bound form that is able to recruit to membranes different sets of downstream effectors directly responsible for vesicle formation, movement, tethering and fusion. RAB20 plays a role in apical endocytosis/recycling. Plays a role in the maturation and acidification of phagosomes that engulf pathogens, such as S.aureus and M.tuberculosis. Plays a role in the fusion of phagosomes with lysosomes. The sequence is that of Ras-related protein Rab-20 from Homo sapiens (Human).